The primary structure comprises 412 residues: Protein trichome birefringence-like 13 (412 aa).

The chain crosses the membrane as a helical; Signal-anchor for type II membrane protein span at residues 9–29; it reads PSLFPLLSLLCFISIFLLLSL. The GDS motif signature appears at 137–139; that stretch reads GDS. Residues 385-399 carry the DCXHWCLPGXXDXWN motif motif; that stretch reads DCMHWCLPGLTDTWN.

Belongs to the PC-esterase family. TBL subfamily.

The protein localises to the membrane. May act as a bridging protein that binds pectin and other cell wall polysaccharides. Probably involved in maintaining esterification of pectins. May be involved in the specific O-acetylation of cell wall polymers. The chain is Protein trichome birefringence-like 13 (TBL13) from Arabidopsis thaliana (Mouse-ear cress).